We begin with the raw amino-acid sequence, 1050 residues long: Zinc finger and BTB domain-containing protein 11 (1050 aa).

Acidic residues predominate over residues 143–156 (LDSGEESNESEDDL). The interval 143-173 (LDSGEESNESEDDLSNFTSPPSTASKSSKKK) is disordered. Residues 157 to 168 (SNFTSPPSTASK) show a composition bias toward low complexity. The 69-residue stretch at 214–282 (CDVTLLIEGE…AYTSVLSFDF (69 aa)) folds into the BTB domain. Disordered stretches follow at residues 373–514 (AEQN…EGGY) and 543–563 (LVQR…STEE). Residues 378 to 399 (EPEQQPAPQASPEAEASVSPVE) are compositionally biased toward low complexity. 2 stretches are compositionally biased toward basic and acidic residues: residues 478–501 (SKDE…DTYR) and 553–563 (PKRDAKESTEE). C2H2-type zinc fingers lie at residues 566–588 (HKCG…TLKH) and 594–616 (YKCP…LIRH). A disordered region spans residues 617-641 (TRKEAPTSSSSNSTSTEASGGSSEK). The segment covering 623 to 638 (TSSSSNSTSTEASGGS) has biased composition (low complexity). 10 C2H2-type zinc fingers span residues 648 to 670 (FICS…MLKH), 676 to 698 (HACQ…QSLH), 704 to 726 (FQCE…MSIH), 732 to 754 (YFCS…LKKH), 763 to 785 (YHCT…MNKH), 791 to 813 (FQCQ…VKSH), 819 to 843 (YRCN…KATH), 855 to 877 (RVCD…MNNH), 883 to 905 (FECL…VRTH), and 911 to 934 (YVCP…TKFH).

Its subcellular location is the nucleus. The protein localises to the nucleolus. Functionally, may be involved in transcriptional regulation. This Mus musculus (Mouse) protein is Zinc finger and BTB domain-containing protein 11.